The chain runs to 352 residues: Chorismate synthase (352 aa).

NADP(+)-binding residues include Arg-48 and Arg-54. Residues 125 to 127, 238 to 239, Ala-278, 293 to 297, and Arg-319 each bind FMN; these read RAS, NA, and KPASS.

This sequence belongs to the chorismate synthase family. In terms of assembly, homotetramer. FMNH2 is required as a cofactor.

The enzyme catalyses 5-O-(1-carboxyvinyl)-3-phosphoshikimate = chorismate + phosphate. It functions in the pathway metabolic intermediate biosynthesis; chorismate biosynthesis; chorismate from D-erythrose 4-phosphate and phosphoenolpyruvate: step 7/7. In terms of biological role, catalyzes the anti-1,4-elimination of the C-3 phosphate and the C-6 proR hydrogen from 5-enolpyruvylshikimate-3-phosphate (EPSP) to yield chorismate, which is the branch point compound that serves as the starting substrate for the three terminal pathways of aromatic amino acid biosynthesis. This reaction introduces a second double bond into the aromatic ring system. The sequence is that of Chorismate synthase from Coxiella burnetii (strain RSA 493 / Nine Mile phase I).